We begin with the raw amino-acid sequence, 425 residues long: Secernin-2 (425 aa).

Residue cysteine 12 is part of the active site. Threonine 52 carries the phosphothreonine modification.

The protein belongs to the peptidase C69 family. Secernin subfamily.

The chain is Secernin-2 (SCRN2) from Homo sapiens (Human).